A 361-amino-acid chain; its full sequence is Methionine import ATP-binding protein MetN (361 aa).

Residues 22–257 (VRLIDVKRRF…PQTDITRSLL (236 aa)) form the ABC transporter domain. 54-61 (GRSGAGKS) contacts ATP.

It belongs to the ABC transporter superfamily. Methionine importer (TC 3.A.1.24) family. In terms of assembly, the complex is composed of two ATP-binding proteins (MetN), two transmembrane proteins (MetI) and a solute-binding protein (MetQ).

Its subcellular location is the cell inner membrane. It carries out the reaction L-methionine(out) + ATP + H2O = L-methionine(in) + ADP + phosphate + H(+). It catalyses the reaction D-methionine(out) + ATP + H2O = D-methionine(in) + ADP + phosphate + H(+). In terms of biological role, part of the ABC transporter complex MetNIQ involved in methionine import. Responsible for energy coupling to the transport system. This is Methionine import ATP-binding protein MetN from Rhizobium etli (strain ATCC 51251 / DSM 11541 / JCM 21823 / NBRC 15573 / CFN 42).